The sequence spans 845 residues: Translation initiation factor IF-2 (845 aa).

Composition is skewed to basic and acidic residues over residues 139–198 (EAKR…EKPA) and 206–228 (FRSE…KELH). The interval 139–253 (EAKRQAAEEE…PQKAAPAAKH (115 aa)) is disordered. In terms of domain architecture, tr-type G spans 345–512 (SRAAVVTIMG…AILLQAEVME (168 aa)). The segment at 354 to 361 (GHVDHGKT) is G1. 354–361 (GHVDHGKT) provides a ligand contact to GTP. The segment at 379–383 (GITQH) is G2. Residues 400–403 (DTPG) form a G3 region. GTP contacts are provided by residues 400–404 (DTPGH) and 454–457 (NKID). The G4 stretch occupies residues 454 to 457 (NKID). A G5 region spans residues 490–492 (SAK).

This sequence belongs to the TRAFAC class translation factor GTPase superfamily. Classic translation factor GTPase family. IF-2 subfamily.

Its subcellular location is the cytoplasm. Its function is as follows. One of the essential components for the initiation of protein synthesis. Protects formylmethionyl-tRNA from spontaneous hydrolysis and promotes its binding to the 30S ribosomal subunits. Also involved in the hydrolysis of GTP during the formation of the 70S ribosomal complex. This chain is Translation initiation factor IF-2, found in Nitrosococcus oceani (strain ATCC 19707 / BCRC 17464 / JCM 30415 / NCIMB 11848 / C-107).